The primary structure comprises 97 residues: Mapk-regulated corepressor-interacting protein 1 (97 aa).

The tract at residues 1-29 (MTSSPVSRVVYNGKRNSSPRSPTNSSEIF) is disordered. Low complexity predominate over residues 15–26 (RNSSPRSPTNSS). Ser21 carries the phosphoserine modification. At Thr30 the chain carries Phosphothreonine. Tyr41 carries the post-translational modification Phosphotyrosine. Residue Lys79 is modified to N6-acetyllysine. Positions 80–84 (PIDLS) match the PXDLS motif motif.

The protein belongs to the MCRIP family. As to quaternary structure, interacts (unphosphorylated form, via the PXDLS motif) with CTBP1, competitively inhibiting CTBP-ZEB1 interaction. Interacts with CTBP2. Interacts with MCRIP2. Interacts with DDX6. In terms of processing, phosphorylation by MAPK3/1 (ERK1/2) regulates MCRIP1 binding to CTBP(s). In terms of tissue distribution, widely expressed (at protein level).

The protein resides in the nucleus. The protein localises to the cytoplasm. Its subcellular location is the stress granule. The phosphorylation status of MCRIP1 functions as a molecular switch to regulate epithelial-mesenchymal transition. Unphosphorylated MCRIP1 binds to and inhibits the transcriptional corepressor CTBP(s). When phosphorylated by MAPK/ERK, MCRIP1 releases CTBP(s) resulting in transcriptional silencing of the E-cadherin gene and induction of epithelial-mesenchymal transition. In Mus musculus (Mouse), this protein is Mapk-regulated corepressor-interacting protein 1 (Mcrip1).